A 243-amino-acid polypeptide reads, in one-letter code: Proteasome subunit beta (243 aa).

Over residues 1–16 (MRAPQHNSDFSRTVNQ) the composition is skewed to polar residues. Positions 1–29 (MRAPQHNSDFSRTVNQLADDPNPYEPEVG) are disordered. The propeptide at 1 to 48 (MRAPQHNSDFSRTVNQLADDPNPYEPEVGSMPKNEFSRADLDNVNKTG) is removed in mature form; by autocatalysis. The Nucleophile role is filled by threonine 49.

It belongs to the peptidase T1B family. The 20S proteasome core is composed of 14 alpha and 14 beta subunits that assemble into four stacked heptameric rings, resulting in a barrel-shaped structure. The two inner rings, each composed of seven catalytic beta subunits, are sandwiched by two outer rings, each composed of seven alpha subunits. The catalytic chamber with the active sites is on the inside of the barrel. Has a gated structure, the ends of the cylinder being occluded by the N-termini of the alpha-subunits. Is capped at one or both ends by the proteasome regulatory ATPase, PAN.

Its subcellular location is the cytoplasm. It carries out the reaction Cleavage of peptide bonds with very broad specificity.. The formation of the proteasomal ATPase PAN-20S proteasome complex, via the docking of the C-termini of PAN into the intersubunit pockets in the alpha-rings, triggers opening of the gate for substrate entry. Interconversion between the open-gate and close-gate conformations leads to a dynamic regulation of the 20S proteasome proteolysis activity. Functionally, component of the proteasome core, a large protease complex with broad specificity involved in protein degradation. The sequence is that of Proteasome subunit beta from Natrialba magadii (strain ATCC 43099 / DSM 3394 / CCM 3739 / CIP 104546 / IAM 13178 / JCM 8861 / NBRC 102185 / NCIMB 2190 / MS3) (Natronobacterium magadii).